The chain runs to 238 residues: Ribosomal RNA small subunit methyltransferase G (238 aa).

Residues G78, F83, 129–130, and R148 contribute to the S-adenosyl-L-methionine site; that span reads AE. The tract at residues 217–238 is disordered; that stretch reads KKKETPKKYPRKAGTPAKSPIK.

This sequence belongs to the methyltransferase superfamily. RNA methyltransferase RsmG family.

It is found in the cytoplasm. Specifically methylates the N7 position of a guanine in 16S rRNA. This is Ribosomal RNA small subunit methyltransferase G from Lactococcus lactis subsp. cremoris (strain MG1363).